A 1196-amino-acid polypeptide reads, in one-letter code: ATP-dependent helicase/deoxyribonuclease subunit B (1196 aa).

Residues C823, C1149, C1152, and C1158 each coordinate [4Fe-4S] cluster.

It belongs to the helicase family. AddB/RexB type 2 subfamily. In terms of assembly, heterodimer of AddA and RexB. Mg(2+) serves as cofactor. The cofactor is [4Fe-4S] cluster.

Its function is as follows. The heterodimer acts as both an ATP-dependent DNA helicase and an ATP-dependent, dual-direction single-stranded exonuclease. Recognizes the chi site generating a DNA molecule suitable for the initiation of homologous recombination. This subunit has 5' -&gt; 3' nuclease activity but not helicase activity. In Enterococcus faecalis (strain ATCC 700802 / V583), this protein is ATP-dependent helicase/deoxyribonuclease subunit B.